Reading from the N-terminus, the 257-residue chain is Small ribosomal subunit protein uS2 (257 aa).

It belongs to the universal ribosomal protein uS2 family.

This is Small ribosomal subunit protein uS2 from Trichlorobacter lovleyi (strain ATCC BAA-1151 / DSM 17278 / SZ) (Geobacter lovleyi).